An 83-amino-acid chain; its full sequence is SPbeta prophage-derived uncharacterized protein YopE (83 aa).

The next 2 helical transmembrane spans lie at Ala5–Val25 and Val60–Phe80.

The protein localises to the cell membrane. This chain is SPbeta prophage-derived uncharacterized protein YopE (yopE), found in Bacillus subtilis (strain 168).